The primary structure comprises 318 residues: Malate dehydrogenase (318 aa).

Residues 10-15 (GGGQIG) and Asp34 contribute to the NAD(+) site. Residues Arg83 and Arg89 each contribute to the substrate site. Residues Asn96 and 119–121 (ISN) contribute to the NAD(+) site. Positions 121 and 152 each coordinate substrate. The active-site Proton acceptor is the His176.

It belongs to the LDH/MDH superfamily. MDH type 3 family.

It carries out the reaction (S)-malate + NAD(+) = oxaloacetate + NADH + H(+). Functionally, catalyzes the reversible oxidation of malate to oxaloacetate. The polypeptide is Malate dehydrogenase (Geotalea uraniireducens (strain Rf4) (Geobacter uraniireducens)).